A 479-amino-acid polypeptide reads, in one-letter code: Glutamyl-tRNA(Gln) amidotransferase subunit A (479 aa).

Catalysis depends on charge relay system residues Lys75 and Ser150. The Acyl-ester intermediate role is filled by Ser174.

It belongs to the amidase family. GatA subfamily. In terms of assembly, heterotrimer of A, B and C subunits.

The catalysed reaction is L-glutamyl-tRNA(Gln) + L-glutamine + ATP + H2O = L-glutaminyl-tRNA(Gln) + L-glutamate + ADP + phosphate + H(+). Allows the formation of correctly charged Gln-tRNA(Gln) through the transamidation of misacylated Glu-tRNA(Gln) in organisms which lack glutaminyl-tRNA synthetase. The reaction takes place in the presence of glutamine and ATP through an activated gamma-phospho-Glu-tRNA(Gln). This chain is Glutamyl-tRNA(Gln) amidotransferase subunit A, found in Synechococcus elongatus (strain ATCC 33912 / PCC 7942 / FACHB-805) (Anacystis nidulans R2).